The sequence spans 656 residues: Threonine--tRNA ligase (656 aa).

Positions 1 to 64 (MAEAASLTFP…ERSGKIEIIT (64 aa)) constitute a TGS domain. The tract at residues 246–548 (DHRRLGREMD…LIENYAGHFP (303 aa)) is catalytic. 3 residues coordinate Zn(2+): cysteine 342, histidine 393, and histidine 525.

This sequence belongs to the class-II aminoacyl-tRNA synthetase family. As to quaternary structure, homodimer. Zn(2+) serves as cofactor.

It is found in the cytoplasm. The enzyme catalyses tRNA(Thr) + L-threonine + ATP = L-threonyl-tRNA(Thr) + AMP + diphosphate + H(+). Functionally, catalyzes the attachment of threonine to tRNA(Thr) in a two-step reaction: L-threonine is first activated by ATP to form Thr-AMP and then transferred to the acceptor end of tRNA(Thr). Also edits incorrectly charged L-seryl-tRNA(Thr). The polypeptide is Threonine--tRNA ligase (Chelativorans sp. (strain BNC1)).